Reading from the N-terminus, the 120-residue chain is Accessory gland protein Acp53Ea (120 aa).

The first 23 residues, 1-23 (MKLIKVTLVFSLLALVFVAQTEA), serve as a signal peptide directing secretion.

Main cells of accessory gland and seminal fluid.

It localises to the secreted. In terms of biological role, responsible for physiological and behavioral changes in mated female flies. This Drosophila melanogaster (Fruit fly) protein is Accessory gland protein Acp53Ea (Acp53Ea).